The primary structure comprises 96 residues: Co-chaperonin GroES (96 aa).

The protein belongs to the GroES chaperonin family. In terms of assembly, heptamer of 7 subunits arranged in a ring. Interacts with the chaperonin GroEL.

The protein localises to the cytoplasm. Its function is as follows. Together with the chaperonin GroEL, plays an essential role in assisting protein folding. The GroEL-GroES system forms a nano-cage that allows encapsulation of the non-native substrate proteins and provides a physical environment optimized to promote and accelerate protein folding. GroES binds to the apical surface of the GroEL ring, thereby capping the opening of the GroEL channel. The protein is Co-chaperonin GroES of Geotalea daltonii (strain DSM 22248 / JCM 15807 / FRC-32) (Geobacter daltonii).